We begin with the raw amino-acid sequence, 228 residues long: THAP domain-containing protein 2 (228 aa).

A THAP-type zinc finger spans residues 1-80 (MPTNCAAAGC…LKMDAVPTIF (80 aa)). An HCFC1-binding motif (HBM) motif is present at residues 123–126 (EHSY).

The sequence is that of THAP domain-containing protein 2 (THAP2) from Homo sapiens (Human).